We begin with the raw amino-acid sequence, 306 residues long: Lipoyl synthase (306 aa).

[4Fe-4S] cluster contacts are provided by C55, C60, C66, C81, C85, C88, and S294. The region spanning 67-283 (WNHRTATFLL…RAYALARGFR (217 aa)) is the Radical SAM core domain.

Belongs to the radical SAM superfamily. Lipoyl synthase family. It depends on [4Fe-4S] cluster as a cofactor.

The protein resides in the cytoplasm. The enzyme catalyses [[Fe-S] cluster scaffold protein carrying a second [4Fe-4S](2+) cluster] + N(6)-octanoyl-L-lysyl-[protein] + 2 oxidized [2Fe-2S]-[ferredoxin] + 2 S-adenosyl-L-methionine + 4 H(+) = [[Fe-S] cluster scaffold protein] + N(6)-[(R)-dihydrolipoyl]-L-lysyl-[protein] + 4 Fe(3+) + 2 hydrogen sulfide + 2 5'-deoxyadenosine + 2 L-methionine + 2 reduced [2Fe-2S]-[ferredoxin]. The protein operates within protein modification; protein lipoylation via endogenous pathway; protein N(6)-(lipoyl)lysine from octanoyl-[acyl-carrier-protein]: step 2/2. Its function is as follows. Catalyzes the radical-mediated insertion of two sulfur atoms into the C-6 and C-8 positions of the octanoyl moiety bound to the lipoyl domains of lipoate-dependent enzymes, thereby converting the octanoylated domains into lipoylated derivatives. The chain is Lipoyl synthase from Chloroflexus aggregans (strain MD-66 / DSM 9485).